Consider the following 127-residue polypeptide: Large ribosomal subunit protein bL20c (127 aa).

This sequence belongs to the bacterial ribosomal protein bL20 family.

The protein resides in the plastid. Its subcellular location is the chloroplast. Its function is as follows. Binds directly to 23S ribosomal RNA and is necessary for the in vitro assembly process of the 50S ribosomal subunit. It is not involved in the protein synthesizing functions of that subunit. This is Large ribosomal subunit protein bL20c from Jasminum nudiflorum (Winter jasmine).